A 40-amino-acid chain; its full sequence is Cytochrome c3 hydrogenase small chain (40 aa).

Fe cation is required as a cofactor.

The catalysed reaction is 2 Fe(III)-[cytochrome c3] + H2 = 2 Fe(II)-[cytochrome c3] + 2 H(+). The chain is Cytochrome c3 hydrogenase small chain (hoxK) from Acidithiobacillus ferrooxidans (Thiobacillus ferrooxidans).